Consider the following 240-residue polypeptide: Splicing factor U2AF 35 kDa subunit (240 aa).

At A2 the chain carries N-acetylalanine. The C3H1-type 1 zinc-finger motif lies at 12 to 40 (EKDKVNCSFYFKIGACRHGDRCSRLHNKP). The residue at position 39 (K39) is an N6-methyllysine. Phosphoserine is present on residues S61 and S145. An RRM domain is found at 65-147 (LRCAVSDVEM…QPIHAELSPV (83 aa)). The C3H1-type 2 zinc finger occupies 149–176 (DFREACCRQYEMGECTRGGFCNFMHLKP). R165 is subject to Omega-N-methylarginine. Residues 183–240 (RELYGRRRKKHRSRSRSRERRSRSRDRGRGGGGGGGGGGGGRERDRRRSRDRERSGRF) are disordered. Residues 188–208 (RRRKKHRSRSRSRERRSRSRD) show a composition bias toward basic residues. Residues 212 to 222 (GGGGGGGGGGG) are compositionally biased toward gly residues. Over residues 223-240 (GRERDRRRSRDRERSGRF) the composition is skewed to basic and acidic residues.

Belongs to the splicing factor SR family. Identified in the spliceosome C complex. Heterodimer with U2AF2. Interacts (via RS domain) with PHF5A (via N-terminus). Interacts with ZRANB2. Interacts with SDE2. Interacts with SF3B1.

The protein localises to the nucleus. It localises to the nucleus speckle. Plays a critical role in both constitutive and enhancer-dependent splicing by mediating protein-protein interactions and protein-RNA interactions required for accurate 3'-splice site selection. Recruits U2 snRNP to the branch point. Directly mediates interactions between U2AF2 and proteins bound to the enhancers and thus may function as a bridge between U2AF2 and the enhancer complex to recruit it to the adjacent intron. The protein is Splicing factor U2AF 35 kDa subunit (U2AF1) of Homo sapiens (Human).